A 500-amino-acid polypeptide reads, in one-letter code: MASVLLTRRLACSFRHNHRLLVPGWRHISQAAAKVDVEFDYDGPLMKTEVPGPRSRELMKQLNIIQNAEAVHFFCNYEESRGNYLVDVDGNRMLDLYSQISSIPIGYSHPALVKLVQQPQNVSTFINRPALGILPPENFVEKLRESLLSVAPKGMSQLITMACGSCSNENAFKTIFMWYRSKERGQSAFSKEELETCMINQAPGCPDYSILSFMGAFHGRTMGCLATTHSKAIHKIDIPSFDWPIAPFPRLKYPLEEFVKENQQEEARCLEEVEDLIVKYRKKKKTVAGIIVEPIQSEGGDNHASDDFFRKLRDISRKHGCAFLVDEVQTGGGSTGKFWAHEHWGLDDPADVMTFSKKMMTGGFFHKEEFRPNAPYRIFNTWLGDPSKNLLLAEVINIIKREDLLSNAAHAGKVLLTGLLDLQARYPQFISRVRGRGTFCSFDTPDESIRNKLISIARNKGVMLGGCGDKSIRFRPTLVFRDHHAHLFLNIFSDILADFK.

The transit peptide at 1 to 28 (MASVLLTRRLACSFRHNHRLLVPGWRHI) directs the protein to the mitochondrion. A [2Fe-2S] cluster-binding site is contributed by cysteine 163. Position 164 to 165 (164 to 165 (GS)) interacts with pyridoxal 5'-phosphate. Cysteine 166 lines the [2Fe-2S] cluster pocket. A substrate-binding site is contributed by arginine 220. Residue lysine 231 is modified to N6-succinyllysine. Lysine 252 carries the N6-acetyllysine; alternate modification. Lysine 252 carries the post-translational modification N6-succinyllysine; alternate. Residues lysine 279 and lysine 318 each carry the N6-acetyllysine modification. At lysine 357 the chain carries N6-(pyridoxal phosphate)lysine. Threonine 381 contributes to the pyridoxal 5'-phosphate binding site. Lysine 413 carries the N6-acetyllysine; alternate modification. Lysine 413 carries the N6-succinyllysine; alternate modification. N6-acetyllysine occurs at positions 452 and 470.

The protein belongs to the class-III pyridoxal-phosphate-dependent aminotransferase family. In terms of assembly, homodimer; disulfide-linked. Pyridoxal 5'-phosphate is required as a cofactor. It depends on [2Fe-2S] cluster as a cofactor.

The protein resides in the mitochondrion matrix. The catalysed reaction is 4-aminobutanoate + 2-oxoglutarate = succinate semialdehyde + L-glutamate. It carries out the reaction (S)-3-amino-2-methylpropanoate + 2-oxoglutarate = 2-methyl-3-oxopropanoate + L-glutamate. Functionally, catalyzes the conversion of gamma-aminobutyrate and L-beta-aminoisobutyrate to succinate semialdehyde and methylmalonate semialdehyde, respectively. Can also convert delta-aminovalerate and beta-alanine. This chain is 4-aminobutyrate aminotransferase, mitochondrial (ABAT), found in Sus scrofa (Pig).